The chain runs to 474 residues: tRNA-2-methylthio-N(6)-dimethylallyladenosine synthase (474 aa).

One can recognise an MTTase N-terminal domain in the interval 3–120 (KKLHIKTWGC…LPEMINHVQG (118 aa)). [4Fe-4S] cluster is bound by residues C12, C49, C83, C157, C161, and C164. The Radical SAM core domain maps to 143-375 (RAEGPTAFVS…QQRISQQAME (233 aa)). Residues 378 to 441 (RKMVGTVQRV…ASSLRGILLR (64 aa)) form the TRAM domain.

This sequence belongs to the methylthiotransferase family. MiaB subfamily. As to quaternary structure, monomer. It depends on [4Fe-4S] cluster as a cofactor.

The protein localises to the cytoplasm. It catalyses the reaction N(6)-dimethylallyladenosine(37) in tRNA + (sulfur carrier)-SH + AH2 + 2 S-adenosyl-L-methionine = 2-methylsulfanyl-N(6)-dimethylallyladenosine(37) in tRNA + (sulfur carrier)-H + 5'-deoxyadenosine + L-methionine + A + S-adenosyl-L-homocysteine + 2 H(+). Its function is as follows. Catalyzes the methylthiolation of N6-(dimethylallyl)adenosine (i(6)A), leading to the formation of 2-methylthio-N6-(dimethylallyl)adenosine (ms(2)i(6)A) at position 37 in tRNAs that read codons beginning with uridine. The polypeptide is tRNA-2-methylthio-N(6)-dimethylallyladenosine synthase (Yersinia pestis bv. Antiqua (strain Antiqua)).